The chain runs to 265 residues: S-adenosylmethionine decarboxylase proenzyme (265 aa).

Ser-114 (schiff-base intermediate with substrate; via pyruvic acid) is an active-site residue. Ser-114 bears the Pyruvic acid (Ser); by autocatalysis mark. The Proton acceptor; for processing activity role is filled by His-119. Residue Cys-142 is the Proton donor; for catalytic activity of the active site.

It belongs to the prokaryotic AdoMetDC family. Type 2 subfamily. In terms of assembly, heterooctamer of four alpha and four beta chains arranged as a tetramer of alpha/beta heterodimers. Pyruvate serves as cofactor. Is synthesized initially as an inactive proenzyme. Formation of the active enzyme involves a self-maturation process in which the active site pyruvoyl group is generated from an internal serine residue via an autocatalytic post-translational modification. Two non-identical subunits are generated from the proenzyme in this reaction, and the pyruvate is formed at the N-terminus of the alpha chain, which is derived from the carboxyl end of the proenzyme. The post-translation cleavage follows an unusual pathway, termed non-hydrolytic serinolysis, in which the side chain hydroxyl group of the serine supplies its oxygen atom to form the C-terminus of the beta chain, while the remainder of the serine residue undergoes an oxidative deamination to produce ammonia and the pyruvoyl group blocking the N-terminus of the alpha chain.

It catalyses the reaction S-adenosyl-L-methionine + H(+) = S-adenosyl 3-(methylsulfanyl)propylamine + CO2. The protein operates within amine and polyamine biosynthesis; S-adenosylmethioninamine biosynthesis; S-adenosylmethioninamine from S-adenosyl-L-methionine: step 1/1. Functionally, catalyzes the decarboxylation of S-adenosylmethionine to S-adenosylmethioninamine (dcAdoMet), the propylamine donor required for the synthesis of the polyamines spermine and spermidine from the diamine putrescine. This chain is S-adenosylmethionine decarboxylase proenzyme, found in Buchnera aphidicola subsp. Acyrthosiphon pisum (strain APS) (Acyrthosiphon pisum symbiotic bacterium).